Reading from the N-terminus, the 240-residue chain is Homeobox-leucine zipper protein HOX14 (240 aa).

The disordered stretch occupies residues S26 to R64. Residues R35–A44 are compositionally biased toward basic residues. A compositionally biased stretch (gly residues) spans C46–V56. Positions G59–L118 form a DNA-binding region, homeobox. A coiled-coil region spans residues Q108–S167.

It belongs to the HD-ZIP homeobox family. Class I subfamily. In terms of tissue distribution, expressed in roots, stems, leaf blades and panicles.

It is found in the nucleus. Probable transcription factor. The protein is Homeobox-leucine zipper protein HOX14 (HOX14) of Oryza sativa subsp. japonica (Rice).